The following is a 607-amino-acid chain: Fatty acid amide hydrolase (607 aa).

Catalysis depends on charge relay system residues K205 and S281. Residue 302-305 (GGGS) coordinates substrate. Catalysis depends on S305, which acts as the Acyl-ester intermediate.

It belongs to the amidase family. As to quaternary structure, forms homodimers. Expressed in roots, leaves and flowers. Expressed in seedlings, flowers, roots, siliques, seeds and leaves.

It is found in the endoplasmic reticulum membrane. The protein localises to the cell membrane. The catalysed reaction is N-(5Z,8Z,11Z,14Z-eicosatetraenoyl)-ethanolamine + H2O = ethanolamine + (5Z,8Z,11Z,14Z)-eicosatetraenoate. It catalyses the reaction N-(9Z,12Z-octadecadienoyl)-ethanolamine + H2O = ethanolamine + (9Z,12Z)-octadecadienoate. The enzyme catalyses N-hexadecanoylethanolamine + H2O = ethanolamine + hexadecanoate. It carries out the reaction N-tetradecanoylethanolamine + H2O = tetradecanoate + ethanolamine. The catalysed reaction is N-dodecanoylethanolamine + H2O = dodecanoate + ethanolamine. With respect to regulation, inhibited by methyl arachidonyl fluorophosphonate (MAFP). Functionally, catalyzes the hydrolysis of bioactive endogenous fatty acid amides to their corresponding acids. The hydrolysis of endogenous amidated lipids terminates their participation as lipid mediators in various signaling systems. Converts a wide range of N-acylethanolamines (NAEs) to their corresponding free fatty acids and ethanolamine. Can use oleamide as substrate, but not indole-3-acetamide, 1-naphtalene-acetamide, nicotinic acid amide or L-asparagine. Can use 2-arachidonylglycerol as substrate. Participates in the regulation of plant growth. Hydrolyzes N-dodecanoylethanolamine, which is has a growth inhibitory effect on seedling growth. Involved in plant defense signaling. Involved in abscisic acid (ABA) signaling through mechanisms that are independent of the catalytic activity. Involved in the regulation of flowering time. Catalyzes the hydrolysis of N-acyl L-homoserine lactones (AHLs), which are a class of signaling molecules produced by bacteria for quorum sensing. Accumulation of L-homoserine appears to encourage plant growth at low concentrations by stimulating transpiration, but higher concentrations inhibit growth by stimulating ethylene production. The chain is Fatty acid amide hydrolase from Arabidopsis thaliana (Mouse-ear cress).